We begin with the raw amino-acid sequence, 130 residues long: Small ribosomal subunit protein uS11 (130 aa).

This sequence belongs to the universal ribosomal protein uS11 family. Part of the 30S ribosomal subunit.

Functionally, located on the platform of the 30S subunit. The polypeptide is Small ribosomal subunit protein uS11 (Nanoarchaeum equitans (strain Kin4-M)).